The following is a 522-amino-acid chain: Zinc finger protein STOP1 homolog (522 aa).

Polar residues-rich tracts occupy residues 1-12 and 19-40; these read MDSGLGRSSETS and MASN…SSMD. 2 disordered regions span residues 1–43 and 234–260; these read MDSG…DQPP and CGGE…EREN. Positions 244-260 are enriched in basic and acidic residues; the sequence is MEDHDVKESDDGGEREN. A C2H2-type 1 zinc finger spans residues 282-304; it reads HFCLICGKGFKRDANLRMHMRGH. The segment at 390–421 adopts a C2H2-type 2; atypical zinc-finger fold; it reads KHCGRDKWLCSCGTTFSRKDKLFGHVALFQGH.

The protein localises to the nucleus. Functionally, probable transcription factor that may be involved in aluminum tolerance. This is Zinc finger protein STOP1 homolog from Oryza sativa subsp. japonica (Rice).